The chain runs to 561 residues: Arginine--tRNA ligase (561 aa).

The 'HIGH' region motif lies at 135-145 (ANPTGLLHMGN).

The protein belongs to the class-I aminoacyl-tRNA synthetase family. As to quaternary structure, monomer.

The protein resides in the cytoplasm. It catalyses the reaction tRNA(Arg) + L-arginine + ATP = L-arginyl-tRNA(Arg) + AMP + diphosphate. The polypeptide is Arginine--tRNA ligase (Desulfitobacterium hafniense (strain DSM 10664 / DCB-2)).